The sequence spans 470 residues: Cysteine--tRNA ligase (470 aa).

C30 provides a ligand contact to Zn(2+). The 'HIGH' region motif lies at 32-42 (PTVYNYIHIGN). 3 residues coordinate Zn(2+): C211, H236, and E240. The short motif at 268-272 (KMSKS) is the 'KMSKS' region element. Position 271 (K271) interacts with ATP.

It belongs to the class-I aminoacyl-tRNA synthetase family. As to quaternary structure, monomer. Zn(2+) serves as cofactor.

Its subcellular location is the cytoplasm. The enzyme catalyses tRNA(Cys) + L-cysteine + ATP = L-cysteinyl-tRNA(Cys) + AMP + diphosphate. The sequence is that of Cysteine--tRNA ligase from Fervidobacterium nodosum (strain ATCC 35602 / DSM 5306 / Rt17-B1).